Consider the following 241-residue polypeptide: Chaperone protein FimC (241 aa).

Positions 1–36 are cleaved as a signal peptide; that stretch reads MSNKNVNVRKSQEITFCLLAGILMFMAMVVAGRAEA.

Belongs to the periplasmic pilus chaperone family.

It is found in the periplasm. Required for the biogenesis of type 1 fimbriae. Binds and interact with FimH. The sequence is that of Chaperone protein FimC (fimC) from Escherichia coli O6:H1 (strain CFT073 / ATCC 700928 / UPEC).